A 426-amino-acid chain; its full sequence is C4-dicarboxylate transport protein (426 aa).

8 consecutive transmembrane segments (helical) span residues 8 to 28 (VLYV…HFYP), 44 to 64 (LIKM…IAGM), 78 to 98 (LLYF…ATHV), 148 to 168 (GEIL…ATAG), 173 to 193 (VVTG…RIIT), 222 to 242 (LIGT…GIIA), 297 to 317 (GYSF…LFIA), and 355 to 375 (AATL…ILGI).

The protein belongs to the dicarboxylate/amino acid:cation symporter (DAACS) (TC 2.A.23) family.

Its subcellular location is the cell inner membrane. Responsible for the transport of dicarboxylates such as succinate, fumarate, and malate from the periplasm across the membrane. The sequence is that of C4-dicarboxylate transport protein from Paraburkholderia xenovorans (strain LB400).